We begin with the raw amino-acid sequence, 352 residues long: Protein TIFY 6B (352 aa).

Residues 1 to 71 (MERDFLGLGS…KSGNYHLPHS (71 aa)) form a disordered region. The segment covering 17 to 26 (VKEETSESSR) has biased composition (basic and acidic residues). Residues 34-54 (MNWSFSNKVSASSSQFLSFRP) show a composition bias toward polar residues. One can recognise a Tify domain in the interval 172 to 207 (PIGSPAQLTIFYAGSVCVYDDISPEKAKAIMLLAGN). The Jas motif lies at 302-326 (PLARKASLARFLEKRKERVTSVSPY). A Nuclear localization signal motif is present at residues 304 to 311 (ARKASLAR).

It belongs to the TIFY/JAZ family. In terms of assembly, homo- and heterodimer. Interacts with COI1, MYC2, MYC3, MYC4, TIFY10A/JAZ1, TIFY10B/JAZ2, TIFY6A/JAZ4, TIFY5A/JAZ8, TIFY7/JAZ9, TIFY9/JAZ10 and TIFY3A/JAZ11. Interacts (via TIFY domain) with AFPH2/NINJA. Post-translationally, ubiquitinated. Targeted for degradation by the SCF(COI1) E3 ubiquitin ligase-proteasome pathway during jasmonate signaling. In terms of tissue distribution, srtongly expressed in root tips.

It is found in the nucleus. Repressor of jasmonate responses. Jasmonoyl-isoleucine (JA-Ile) specifically promotes COI1-TIFY6B/JAZ3 interaction. Acts as a negative regulator of MYC2 function. Feed-back regulated by MYC2. The protein is Protein TIFY 6B (TIFY6B) of Arabidopsis thaliana (Mouse-ear cress).